We begin with the raw amino-acid sequence, 235 residues long: Small ribosomal subunit protein uS2c (235 aa).

This sequence belongs to the universal ribosomal protein uS2 family.

It localises to the plastid. The protein resides in the chloroplast. This Marchantia polymorpha (Common liverwort) protein is Small ribosomal subunit protein uS2c (rps2).